The primary structure comprises 236 residues: 2,3,4,5-tetrahydropyridine-2,6-dicarboxylate N-acetyltransferase (236 aa).

The protein belongs to the transferase hexapeptide repeat family. DapH subfamily.

It carries out the reaction (S)-2,3,4,5-tetrahydrodipicolinate + acetyl-CoA + H2O = L-2-acetamido-6-oxoheptanedioate + CoA. It functions in the pathway amino-acid biosynthesis; L-lysine biosynthesis via DAP pathway; LL-2,6-diaminopimelate from (S)-tetrahydrodipicolinate (acetylase route): step 1/3. Its function is as follows. Catalyzes the transfer of an acetyl group from acetyl-CoA to tetrahydrodipicolinate. The polypeptide is 2,3,4,5-tetrahydropyridine-2,6-dicarboxylate N-acetyltransferase (Clostridium botulinum (strain Kyoto / Type A2)).